The chain runs to 379 residues: UDP-N-acetylglucosamine--N-acetylmuramyl-(pentapeptide) pyrophosphoryl-undecaprenol N-acetylglucosamine transferase (379 aa).

Residues 17–19 (TGG), Asn-128, Arg-169, Ser-197, and Gln-298 each bind UDP-N-acetyl-alpha-D-glucosamine.

This sequence belongs to the glycosyltransferase 28 family. MurG subfamily.

It is found in the cell inner membrane. It carries out the reaction di-trans,octa-cis-undecaprenyl diphospho-N-acetyl-alpha-D-muramoyl-L-alanyl-D-glutamyl-meso-2,6-diaminopimeloyl-D-alanyl-D-alanine + UDP-N-acetyl-alpha-D-glucosamine = di-trans,octa-cis-undecaprenyl diphospho-[N-acetyl-alpha-D-glucosaminyl-(1-&gt;4)]-N-acetyl-alpha-D-muramoyl-L-alanyl-D-glutamyl-meso-2,6-diaminopimeloyl-D-alanyl-D-alanine + UDP + H(+). Its pathway is cell wall biogenesis; peptidoglycan biosynthesis. Its function is as follows. Cell wall formation. Catalyzes the transfer of a GlcNAc subunit on undecaprenyl-pyrophosphoryl-MurNAc-pentapeptide (lipid intermediate I) to form undecaprenyl-pyrophosphoryl-MurNAc-(pentapeptide)GlcNAc (lipid intermediate II). The chain is UDP-N-acetylglucosamine--N-acetylmuramyl-(pentapeptide) pyrophosphoryl-undecaprenol N-acetylglucosamine transferase from Brucella suis biovar 1 (strain 1330).